Here is a 312-residue protein sequence, read N- to C-terminus: HPr kinase/phosphorylase (312 aa).

Residues His139 and Lys160 contribute to the active site. ATP is bound at residue 154–161 (GSSGVGKS). Ser161 contacts Mg(2+). Catalysis depends on Asp178, which acts as the Proton acceptor; for phosphorylation activity. Proton donor; for dephosphorylation activity. The tract at residues 202 to 211 (LEIRGLGIIN) is important for the catalytic mechanism of both phosphorylation and dephosphorylation. Glu203 is a binding site for Mg(2+). Arg244 is a catalytic residue. An important for the catalytic mechanism of dephosphorylation region spans residues 265 to 270 (PVRPGR).

Belongs to the HPrK/P family. Homohexamer. It depends on Mg(2+) as a cofactor.

It carries out the reaction [HPr protein]-L-serine + ATP = [HPr protein]-O-phospho-L-serine + ADP + H(+). The enzyme catalyses [HPr protein]-O-phospho-L-serine + phosphate + H(+) = [HPr protein]-L-serine + diphosphate. Functionally, catalyzes the ATP- as well as the pyrophosphate-dependent phosphorylation of a specific serine residue in HPr, a phosphocarrier protein of the phosphoenolpyruvate-dependent sugar phosphotransferase system (PTS). HprK/P also catalyzes the pyrophosphate-producing, inorganic phosphate-dependent dephosphorylation (phosphorolysis) of seryl-phosphorylated HPr (P-Ser-HPr). The two antagonistic activities of HprK/P are regulated by several intracellular metabolites, which change their concentration in response to the absence or presence of rapidly metabolisable carbon sources (glucose, fructose, etc.) in the growth medium. Therefore, by controlling the phosphorylation state of HPr, HPrK/P is a sensor enzyme that plays a major role in the regulation of carbon metabolism and sugar transport: it mediates carbon catabolite repression (CCR), and regulates PTS-catalyzed carbohydrate uptake and inducer exclusion. The chain is HPr kinase/phosphorylase from Listeria monocytogenes serotype 4b (strain CLIP80459).